The chain runs to 188 residues: MPKASEIKKGFAIESNGKTLLVKDIEVTTPGGRGGSKIYKMRCTDLATGARVEERYKSDDVVETVEMNKKAVSFSYVDGDDYIFMDNADYSQYVFKHADVEDDLLFINEDTQGIHVILVNGESVGLELPSSVELVIEETDPSIKGASASARTKPARLSTGLVVQVPEYIATGDRVIINTAERKYMSRA.

It belongs to the elongation factor P family.

The protein is Elongation factor P-like protein of Vibrio vulnificus (strain CMCP6).